The primary structure comprises 311 residues: Malate dehydrogenase (311 aa).

NAD(+)-binding positions include 7 to 13 (GAAGGIG) and Asp-34. The substrate site is built by Arg-81 and Arg-87. NAD(+) is bound by residues Asn-94 and 117–119 (ITN). Residues Asn-119 and Arg-153 each contribute to the substrate site. His-177 acts as the Proton acceptor in catalysis. Residue Met-227 coordinates NAD(+).

This sequence belongs to the LDH/MDH superfamily. MDH type 1 family. In terms of assembly, homodimer.

The catalysed reaction is (S)-malate + NAD(+) = oxaloacetate + NADH + H(+). Its function is as follows. Catalyzes the reversible oxidation of malate to oxaloacetate. The sequence is that of Malate dehydrogenase from Aeromonas salmonicida (strain A449).